A 93-amino-acid polypeptide reads, in one-letter code: UPF0147 protein PH1921.2 (93 aa).

Belongs to the UPF0147 family.

In Pyrococcus horikoshii (strain ATCC 700860 / DSM 12428 / JCM 9974 / NBRC 100139 / OT-3), this protein is UPF0147 protein PH1921.2.